The primary structure comprises 503 residues: Efflux pump vrtL (503 aa).

The disordered stretch occupies residues 1-59; that stretch reads MSKLSDNHSSASEGEKEAGDLESGPTAISSEPSFDDADRDPNLITWDGPKDPENPKNWP. A glycan (N-linked (GlcNAc...) asparagine) is linked at Asn-7. Transmembrane regions (helical) follow at residues 68-88, 101-121, 133-153, 162-182, 194-214, 221-241, 295-315, 329-349, 377-397, 401-421, 432-454, and 471-491; these read WTVS…APAM, IEIY…PIFF, LLQI…FATT, FLAG…ISDM, VYTL…GFIA, WVFW…FFWL, IVFC…LMFA, PGIG…GLFF, SLAV…WSIG, WIMP…CLQG, TYAA…GFPL, and LLAF…WHFG.

Belongs to the major facilitator superfamily.

The protein resides in the membrane. Efflux pump; part of the gene cluster that mediates the biosynthesis of viridicatumtoxin, a tetracycline-like fungal meroterpenoid with a unique, fused spirobicyclic ring system. In Penicillium aethiopicum, this protein is Efflux pump vrtL.